Consider the following 589-residue polypeptide: MKTLTSQGIRTYGRLLQATKQYWPIFLIGVVGMIAVSLSDAGFTWLIKPIINRGFIARDLVFIRWLPFIIVLVFLFRGAANFLSTYFINRVARNIVMDFRRAIFSHLLRLPAEFYDRHSSGHLLSTVIYNVEQVAQASSDALIITLQASSLVVGLLVVMFLVSWKLTLFFLVITPLIAWVMRVCSARLRHLSTSVQKSVGEVTHIASEAIEAYKIVRLYGGQKYENEKFRHATKLNQQRELKVVVTNSVGTSLVQLLIAIPIAIVLFFATQPSFHVTAGSFASIVSAMIMMLRPVRRLTMVNSYIQKGIAAAESIFKLLDEDVEKDRGERHLVRARGAIEYQGVSFAYDNSKKTILSEISFSIEPGQMVAIVGRSGAGKSTLINLLPRFYDASTGVIKIDDINIKEFRLQELRNQFGLVSQHTTLFNDTILNNIAYGQAGSIDKRKIIEAARAAHAMEFIEQLPEGLDTVIGENGVRLSGGQRQRIAIARALFKNAPIHILDEATSSLDTHSERHIQAALDNLMDQCTTLVIAHRLSTIERADWIMVLEEGRLIEKGTHQQLLTLNGAYAELYRMQFAEKPAAMTALDE.

Helical transmembrane passes span 23 to 43, 60 to 80, 153 to 173, 249 to 269, and 272 to 292; these read WPIF…DAGF, LVFI…RGAA, VGLL…FLVI, VGTS…LFFA, and PSFH…IMML. The region spanning 27–307 is the ABC transmembrane type-1 domain; sequence LIGVVGMIAV…LTMVNSYIQK (281 aa). The 237-residue stretch at 339–575 folds into the ABC transporter domain; the sequence is IEYQGVSFAY…NGAYAELYRM (237 aa). 373-380 contacts ATP; the sequence is GRSGAGKS.

This sequence belongs to the ABC transporter superfamily. Lipid exporter (TC 3.A.1.106) family. As to quaternary structure, homodimer.

It is found in the cell inner membrane. The enzyme catalyses ATP + H2O + lipid A-core oligosaccharideSide 1 = ADP + phosphate + lipid A-core oligosaccharideSide 2.. Involved in lipopolysaccharide (LPS) biosynthesis. Translocates lipid A-core from the inner to the outer leaflet of the inner membrane. Transmembrane domains (TMD) form a pore in the inner membrane and the ATP-binding domain (NBD) is responsible for energy generation. In Coxiella burnetii (strain RSA 493 / Nine Mile phase I), this protein is ATP-dependent lipid A-core flippase.